The sequence spans 228 residues: UPF0758 protein CTC_02075 (228 aa).

One can recognise an MPN domain in the interval 106–228 (NITNPKDAAY…YISLKEKDIL (123 aa)). Zn(2+) contacts are provided by His-177, His-179, and Asp-190. The JAMM motif signature appears at 177-190 (HNHPSGDTTPSKED).

It belongs to the UPF0758 family.

This Clostridium tetani (strain Massachusetts / E88) protein is UPF0758 protein CTC_02075.